The sequence spans 115 residues: Toxin-like structure LSTX-R1 (115 aa).

Residues 1–18 form the signal peptide; that stretch reads MKLSLIIIATSLVIAVVA. Residues 19-51 constitute a propeptide that is removed on maturation; that stretch reads FPSKDSAATDFDKTESLENVEERVETALDERPR.

It belongs to the neurotoxin 25 family. F7 subfamily. Contains 4 disulfide bonds. Expressed by the venom gland.

It localises to the secreted. The protein is Toxin-like structure LSTX-R1 of Lycosa singoriensis (Wolf spider).